An 816-amino-acid polypeptide reads, in one-letter code: Glycerol-3-phosphate acyltransferase (816 aa).

The HXXXXD motif motif lies at 298–303 (CHRSHM).

Belongs to the GPAT/DAPAT family.

Its subcellular location is the cell membrane. It carries out the reaction sn-glycerol 3-phosphate + an acyl-CoA = a 1-acyl-sn-glycero-3-phosphate + CoA. It participates in phospholipid metabolism; CDP-diacylglycerol biosynthesis; CDP-diacylglycerol from sn-glycerol 3-phosphate: step 1/3. This Hamiltonella defensa subsp. Acyrthosiphon pisum (strain 5AT) protein is Glycerol-3-phosphate acyltransferase.